We begin with the raw amino-acid sequence, 400 residues long: S-adenosylmethionine synthase (400 aa).

Histidine 15 is an ATP binding site. A Mg(2+)-binding site is contributed by aspartate 17. K(+) is bound at residue glutamate 43. Positions 56 and 99 each coordinate L-methionine. Residues glutamine 99–threonine 109 are flexible loop. Residues aspartate 174 to lysine 176, aspartate 254, arginine 260 to lysine 261, alanine 277, and lysine 281 contribute to the ATP site. Aspartate 254 serves as a coordination point for L-methionine. An L-methionine-binding site is contributed by lysine 285.

This sequence belongs to the AdoMet synthase family. Homotetramer; dimer of dimers. Mg(2+) serves as cofactor. It depends on K(+) as a cofactor.

It localises to the cytoplasm. The catalysed reaction is L-methionine + ATP + H2O = S-adenosyl-L-methionine + phosphate + diphosphate. The protein operates within amino-acid biosynthesis; S-adenosyl-L-methionine biosynthesis; S-adenosyl-L-methionine from L-methionine: step 1/1. Catalyzes the formation of S-adenosylmethionine (AdoMet) from methionine and ATP. The overall synthetic reaction is composed of two sequential steps, AdoMet formation and the subsequent tripolyphosphate hydrolysis which occurs prior to release of AdoMet from the enzyme. The protein is S-adenosylmethionine synthase of Corynebacterium kroppenstedtii (strain DSM 44385 / JCM 11950 / CIP 105744 / CCUG 35717).